A 348-amino-acid polypeptide reads, in one-letter code: Heat-inducible transcription repressor HrcA (348 aa).

It belongs to the HrcA family.

Functionally, negative regulator of class I heat shock genes (grpE-dnaK-dnaJ and groELS operons). Prevents heat-shock induction of these operons. The chain is Heat-inducible transcription repressor HrcA from Thermodesulfovibrio yellowstonii (strain ATCC 51303 / DSM 11347 / YP87).